The sequence spans 270 residues: Co-chaperone protein DjlA (270 aa).

Topologically, residues 1–6 (MQYWGK) are periplasmic. A helical membrane pass occupies residues 7 to 31 (IIGVAVALMMGGGFWGVVLGLLVGH). Over 32-270 (MFDKARSRKM…ELIKEQKGFK (239 aa)) the chain is Cytoplasmic. The region spanning 204-270 (DACNVLGVKT…ELIKEQKGFK (67 aa)) is the J domain.

In terms of assembly, homodimer.

The protein resides in the cell inner membrane. In terms of biological role, regulatory DnaK co-chaperone. Direct interaction between DnaK and DjlA is needed for the induction of the wcaABCDE operon, involved in the synthesis of a colanic acid polysaccharide capsule, possibly through activation of the RcsB/RcsC phosphotransfer signaling pathway. The colanic acid capsule may help the bacterium survive conditions outside the host. The chain is Co-chaperone protein DjlA from Salmonella paratyphi A (strain ATCC 9150 / SARB42).